The following is a 329-amino-acid chain: D-alanine--D-alanine ligase (329 aa).

The 207-residue stretch at 120-326 folds into the ATP-grasp domain; the sequence is KLWLSAIGIP…FADYLEQILR (207 aa). An ATP-binding site is contributed by 150–205; sequence ALAKWGKVFIKAASQGSSVGCYSASNEADLVKGIADAFGYSEQVLIEKAVKPRELE. Mg(2+)-binding residues include aspartate 280, glutamate 293, and asparagine 295.

The protein belongs to the D-alanine--D-alanine ligase family. The cofactor is Mg(2+). Requires Mn(2+) as cofactor.

The protein localises to the cytoplasm. It carries out the reaction 2 D-alanine + ATP = D-alanyl-D-alanine + ADP + phosphate + H(+). It functions in the pathway cell wall biogenesis; peptidoglycan biosynthesis. In terms of biological role, cell wall formation. This chain is D-alanine--D-alanine ligase, found in Aeromonas hydrophila subsp. hydrophila (strain ATCC 7966 / DSM 30187 / BCRC 13018 / CCUG 14551 / JCM 1027 / KCTC 2358 / NCIMB 9240 / NCTC 8049).